We begin with the raw amino-acid sequence, 711 residues long: Ribosomal RNA large subunit methyltransferase K/L (711 aa).

Positions 42-153 (DAQRAVLWSR…KGRATISVDL (112 aa)) constitute a THUMP domain.

The protein belongs to the methyltransferase superfamily. RlmKL family.

It localises to the cytoplasm. It carries out the reaction guanosine(2445) in 23S rRNA + S-adenosyl-L-methionine = N(2)-methylguanosine(2445) in 23S rRNA + S-adenosyl-L-homocysteine + H(+). It catalyses the reaction guanosine(2069) in 23S rRNA + S-adenosyl-L-methionine = N(2)-methylguanosine(2069) in 23S rRNA + S-adenosyl-L-homocysteine + H(+). In terms of biological role, specifically methylates the guanine in position 2445 (m2G2445) and the guanine in position 2069 (m7G2069) of 23S rRNA. The protein is Ribosomal RNA large subunit methyltransferase K/L of Xanthomonas campestris pv. campestris (strain B100).